The chain runs to 155 residues: Ribosome maturation factor RimP (155 aa).

The protein belongs to the RimP family.

Its subcellular location is the cytoplasm. Functionally, required for maturation of 30S ribosomal subunits. In Listeria monocytogenes serotype 4a (strain HCC23), this protein is Ribosome maturation factor RimP.